A 427-amino-acid polypeptide reads, in one-letter code: Adenylosuccinate synthetase (427 aa).

GTP-binding positions include 12–18 (GDEGKGK) and 40–42 (GHT). Catalysis depends on Asp13, which acts as the Proton acceptor. Mg(2+) is bound by residues Asp13 and Gly40. IMP-binding positions include 13–16 (DEGK), 38–41 (NAGH), Thr127, Arg141, Gln222, Thr237, and Arg301. Catalysis depends on His41, which acts as the Proton donor. Substrate is bound at residue 297–303 (VVTKRPR). GTP is bound by residues Arg303, 329–331 (SLD), and 411–413 (AVG).

This sequence belongs to the adenylosuccinate synthetase family. As to quaternary structure, homodimer. The cofactor is Mg(2+).

It localises to the cytoplasm. The enzyme catalyses IMP + L-aspartate + GTP = N(6)-(1,2-dicarboxyethyl)-AMP + GDP + phosphate + 2 H(+). It participates in purine metabolism; AMP biosynthesis via de novo pathway; AMP from IMP: step 1/2. In terms of biological role, plays an important role in the de novo pathway of purine nucleotide biosynthesis. Catalyzes the first committed step in the biosynthesis of AMP from IMP. The polypeptide is Adenylosuccinate synthetase (Leuconostoc mesenteroides subsp. mesenteroides (strain ATCC 8293 / DSM 20343 / BCRC 11652 / CCM 1803 / JCM 6124 / NCDO 523 / NBRC 100496 / NCIMB 8023 / NCTC 12954 / NRRL B-1118 / 37Y)).